The following is a 144-amino-acid chain: Translation initiation factor 5A (144 aa).

K38 carries the hypusine modification.

It belongs to the eIF-5A family.

It is found in the cytoplasm. Its function is as follows. Functions by promoting the formation of the first peptide bond. In Nanoarchaeum equitans (strain Kin4-M), this protein is Translation initiation factor 5A.